We begin with the raw amino-acid sequence, 501 residues long: ATP synthase subunit alpha (501 aa).

169 to 176 (GDRQTGKT) is a binding site for ATP.

Belongs to the ATPase alpha/beta chains family. As to quaternary structure, F-type ATPases have 2 components, CF(1) - the catalytic core - and CF(0) - the membrane proton channel. CF(1) has five subunits: alpha(3), beta(3), gamma(1), delta(1), epsilon(1). CF(0) has three main subunits: a(1), b(2) and c(9-12). The alpha and beta chains form an alternating ring which encloses part of the gamma chain. CF(1) is attached to CF(0) by a central stalk formed by the gamma and epsilon chains, while a peripheral stalk is formed by the delta and b chains.

The protein resides in the cell membrane. The catalysed reaction is ATP + H2O + 4 H(+)(in) = ADP + phosphate + 5 H(+)(out). Produces ATP from ADP in the presence of a proton gradient across the membrane. The alpha chain is a regulatory subunit. The protein is ATP synthase subunit alpha of Streptococcus pneumoniae (strain 70585).